The primary structure comprises 128 residues: Large ribosomal subunit protein bL17 (128 aa).

The protein belongs to the bacterial ribosomal protein bL17 family. As to quaternary structure, part of the 50S ribosomal subunit. Contacts protein L32.

The protein is Large ribosomal subunit protein bL17 of Histophilus somni (strain 129Pt) (Haemophilus somnus).